A 175-amino-acid polypeptide reads, in one-letter code: ATP-dependent protease subunit HslV (175 aa).

Residue Thr2 is part of the active site. 3 residues coordinate Na(+): Gly158, Cys161, and Thr164.

The protein belongs to the peptidase T1B family. HslV subfamily. In terms of assembly, a double ring-shaped homohexamer of HslV is capped on each side by a ring-shaped HslU homohexamer. The assembly of the HslU/HslV complex is dependent on binding of ATP.

Its subcellular location is the cytoplasm. It catalyses the reaction ATP-dependent cleavage of peptide bonds with broad specificity.. With respect to regulation, allosterically activated by HslU binding. Protease subunit of a proteasome-like degradation complex believed to be a general protein degrading machinery. The protein is ATP-dependent protease subunit HslV of Haemophilus influenzae (strain ATCC 51907 / DSM 11121 / KW20 / Rd).